The primary structure comprises 194 residues: MRLCDTDIEKHLDEGIITISPRPDNGKINGATIDLRLGNSFRVFREHSAPYIDVSGPKEAVAEQLERVMSDEIIVADNEAFFLHPGVLALATTLESVKLPADIIGWLDGRSSLARLGLMVHVTAHRIDPGWEGKIVLEFYNSGKLPLALRPNMIIGALSFEVLSGPAARPYNSRQDAKYKNQQSAVASRINQDR.

DCTP contacts are provided by residues 110–115 (RSSLAR), Asp-128, 136–138 (VLE), Tyr-171, Lys-178, and Gln-182. Catalysis depends on Glu-138, which acts as the Proton donor/acceptor. Residues 173 to 194 (SRQDAKYKNQQSAVASRINQDR) are disordered. Residues 180-194 (KNQQSAVASRINQDR) are compositionally biased toward polar residues.

This sequence belongs to the dCTP deaminase family. As to quaternary structure, homotrimer.

The enzyme catalyses dCTP + H2O + H(+) = dUTP + NH4(+). It participates in pyrimidine metabolism; dUMP biosynthesis; dUMP from dCTP (dUTP route): step 1/2. In terms of biological role, catalyzes the deamination of dCTP to dUTP. This Actinobacillus succinogenes (strain ATCC 55618 / DSM 22257 / CCUG 43843 / 130Z) protein is dCTP deaminase.